The sequence spans 147 residues: Transcriptional repressor NrdR (147 aa).

A zinc finger spans residues C3–C34. Positions P49–A139 constitute an ATP-cone domain.

It belongs to the NrdR family. Requires Zn(2+) as cofactor.

In terms of biological role, negatively regulates transcription of bacterial ribonucleotide reductase nrd genes and operons by binding to NrdR-boxes. The protein is Transcriptional repressor NrdR of Leptothrix cholodnii (strain ATCC 51168 / LMG 8142 / SP-6) (Leptothrix discophora (strain SP-6)).